A 418-amino-acid polypeptide reads, in one-letter code: Protein-lysine N-trimethyltransferase SMYD5 (418 aa).

An SET domain is found at 21–352 (VSVEVRFVSS…PGEEICISYL (332 aa)). The MYND-type zinc finger occupies 98–136 (PELCTVRKDLHQNCPHCQVMYCSAECRLAATEQYHQVLC). Residue Tyr351 participates in S-adenosyl-L-methionine binding. Residues 385–418 (ADEPNVTSEEEEEEEEEEEGEPEDAELGDEMTDV) form a disordered region.

The protein belongs to the class V-like SAM-binding methyltransferase superfamily. Interacts with the N-CoR complex. Interacts with EHMT2 and CBX5. Post-translationally, ubiquitinated and degradaed by the proteasome in response to mild hypothermia (32 degrees Celsius), relieving repression of the SP1 gene.

It is found in the cytoplasm. The catalysed reaction is L-lysyl-[protein] + 3 S-adenosyl-L-methionine = N(6),N(6),N(6)-trimethyl-L-lysyl-[protein] + 3 S-adenosyl-L-homocysteine + 3 H(+). The enzyme catalyses L-lysyl(20)-[histone H4] + 3 S-adenosyl-L-methionine = N(6),N(6),N(6)-trimethyl-L-lysyl(20)-[histone H4] + 3 S-adenosyl-L-homocysteine + 3 H(+). It catalyses the reaction L-lysyl(36)-[histone H3] + 3 S-adenosyl-L-methionine = N(6),N(6),N(6)-trimethyl-L-lysyl(36)-[histone H3] + 3 S-adenosyl-L-homocysteine + 3 H(+). Its function is as follows. Protein-lysine N-trimethyltransferase that specifically catalyzes trimethylation of 'Lys-22' of the RPL40/eL40 subunit of the 60S ribosome, thereby promoting translation elongation and protein synthesis. May also act as a histone methyltransferase in the context of histone octamers, but not on nucleosome substrates: trimethylates 'Lys-36' of histone H3 and 'Lys-20' of histone H4 to form H3K36me3 and H4K20me3, respectively. The histone methyltransferase activity, which is independent of its SET domain, is however unsure in vivo. In association with the NCoR corepressor complex, involved in the repression of toll-like receptor 4 (TLR4)-target inflammatory genes in macrophages, possibly by catalyzing the formation of H4K20me3 at the gene promoters. Plays an important role in embryonic stem (ES) cell self-renewal and differentiation. Maintains genome stability of ES cells during differentiation through regulation of heterochromatin formation and repression of endogenous repetitive DNA elements by promoting H4K20me3 marks. Acts as a regulator of the hypothermia response: its degradation in response to mild hypothermia relieves the formation of H3K36me3 at gene promoters, allowing expression of the neuroprotective gene SP1. The polypeptide is Protein-lysine N-trimethyltransferase SMYD5 (Homo sapiens (Human)).